The sequence spans 99 residues: Transmembrane protein 14A (99 aa).

Transmembrane regions (helical) follow at residues 1–21 (MDLIGFGYAALVTFGSILGYK), 24–44 (GGVLSLIAGLFVGFLAGYGAY), and 79–99 (PAGLVAGLSLLMILRLVLLLL).

Belongs to the TMEM14 family.

Its subcellular location is the mitochondrion membrane. It localises to the endoplasmic reticulum membrane. Functionally, inhibits apoptosis via negative regulation of the mitochondrial outer membrane permeabilization involved in apoptotic signaling pathway. This Bos taurus (Bovine) protein is Transmembrane protein 14A (TMEM14A).